Here is a 324-residue protein sequence, read N- to C-terminus: Concanavalin B (324 aa).

The N-terminal stretch at 1–25 (MGCERKALILMVVIWIMSFWTLSLA) is a signal peptide. In terms of domain architecture, GH18 spans 30–311 (TEIAVYWGQR…TNIIRYLNAT (282 aa)). N-linked (GlcNAc...) asparagine glycosylation is present at Asn309.

This sequence belongs to the glycosyl hydrolase 18 family.

Functionally, may act as a carbohydrate-binding protein. The sequence is that of Concanavalin B from Canavalia ensiformis (Jack bean).